Consider the following 291-residue polypeptide: MLTISVPATSANLGPGFDSIGLALDMQLTLQVLQPSDHWQIDHPFGADVPTDERNLIIKTALHLVPDLQPQHLQMASKIPLARGLGSSSTAIVAGLVLANELTGATRSSAELLEVATQLEGHPDNVAPALLGGLVVATNTDGRVRAVKLPLPMLFASVYVPNEPLLTTASRQALPTELAYHQAVTGSSVANTLVAALATQNWDVALPLLEQDQFHEQYRAKLVPALQTVRDHAHALGLTGTYLSGAGPTVITLGDYGQLATLQAQLSQDTTLTGQLFLLPMDATGVKVQKS.

80-90 (PLARGLGSSST) serves as a coordination point for ATP.

This sequence belongs to the GHMP kinase family. Homoserine kinase subfamily.

Its subcellular location is the cytoplasm. It carries out the reaction L-homoserine + ATP = O-phospho-L-homoserine + ADP + H(+). It participates in amino-acid biosynthesis; L-threonine biosynthesis; L-threonine from L-aspartate: step 4/5. Its function is as follows. Catalyzes the ATP-dependent phosphorylation of L-homoserine to L-homoserine phosphate. The chain is Homoserine kinase from Lactiplantibacillus plantarum (strain ATCC BAA-793 / NCIMB 8826 / WCFS1) (Lactobacillus plantarum).